The following is a 162-amino-acid chain: Large ribosomal subunit protein uL22c (162 aa).

It belongs to the universal ribosomal protein uL22 family. In terms of assembly, part of the 50S ribosomal subunit.

The protein localises to the plastid. Its subcellular location is the chloroplast. In terms of biological role, this protein binds specifically to 23S rRNA. The globular domain of the protein is located near the polypeptide exit tunnel on the outside of the subunit, while an extended beta-hairpin is found that lines the wall of the exit tunnel in the center of the 70S ribosome. In Cucumis sativus (Cucumber), this protein is Large ribosomal subunit protein uL22c (rpl22).